We begin with the raw amino-acid sequence, 122 residues long: Basic phospholipase A2 (122 aa).

7 disulfide bridges follow: Cys26-Cys115, Cys28-Cys44, Cys43-Cys95, Cys49-Cys122, Cys50-Cys88, Cys57-Cys81, and Cys75-Cys86. The Ca(2+) site is built by Tyr27, Gly29, and Gly31. His47 is an active-site residue. Ca(2+) is bound at residue Asp48. Residue Asp89 is part of the active site.

This sequence belongs to the phospholipase A2 family. Group II subfamily. D49 sub-subfamily. In terms of assembly, homodimer. The cofactor is Ca(2+). As to expression, expressed by the venom gland.

It is found in the secreted. The enzyme catalyses a 1,2-diacyl-sn-glycero-3-phosphocholine + H2O = a 1-acyl-sn-glycero-3-phosphocholine + a fatty acid + H(+). In terms of biological role, snake venom phospholipase A2 (PLA2) that inhibits neuromuscular transmission by blocking acetylcholine release from the nerve termini. PLA2 catalyzes the calcium-dependent hydrolysis of the 2-acyl groups in 3-sn-phosphoglycerides. This Gloydius blomhoffii (Mamushi) protein is Basic phospholipase A2.